A 96-amino-acid chain; its full sequence is NADH-ubiquinone oxidoreductase chain 6 (96 aa).

The next 2 membrane-spanning stretches (helical) occupy residues 24 to 44 and 48 to 68; these read MSLL…LGSI and WFAY…FIYV.

Belongs to the complex I subunit 6 family.

It is found in the mitochondrion membrane. It catalyses the reaction a ubiquinone + NADH + 5 H(+)(in) = a ubiquinol + NAD(+) + 4 H(+)(out). In terms of biological role, core subunit of the mitochondrial membrane respiratory chain NADH dehydrogenase (Complex I) that is believed to belong to the minimal assembly required for catalysis. Complex I functions in the transfer of electrons from NADH to the respiratory chain. The immediate electron acceptor for the enzyme is believed to be ubiquinone. The sequence is that of NADH-ubiquinone oxidoreductase chain 6 (ND6) from Albinaria turrita (Door snail).